The following is a 441-amino-acid chain: Ribulose bisphosphate carboxylase large chain (441 aa).

N6,N6,N6-trimethyllysine is present on Lys5. Substrate-binding residues include Asn114 and Thr164. Catalysis depends on Lys166, which acts as the Proton acceptor. Residue Lys168 participates in substrate binding. The Mg(2+) site is built by Lys192, Asp194, and Glu195. At Lys192 the chain carries N6-carboxylysine. His285 (proton acceptor) is an active-site residue. Residues Arg286, His318, and Ser370 each contribute to the substrate site.

It belongs to the RuBisCO large chain family. Type I subfamily. Heterohexadecamer of 8 large chains and 8 small chains; disulfide-linked. The disulfide link is formed within the large subunit homodimers. Mg(2+) is required as a cofactor. In terms of processing, the disulfide bond which can form in the large chain dimeric partners within the hexadecamer appears to be associated with oxidative stress and protein turnover.

It localises to the plastid. The protein resides in the chloroplast. It catalyses the reaction 2 (2R)-3-phosphoglycerate + 2 H(+) = D-ribulose 1,5-bisphosphate + CO2 + H2O. The catalysed reaction is D-ribulose 1,5-bisphosphate + O2 = 2-phosphoglycolate + (2R)-3-phosphoglycerate + 2 H(+). Functionally, ruBisCO catalyzes two reactions: the carboxylation of D-ribulose 1,5-bisphosphate, the primary event in carbon dioxide fixation, as well as the oxidative fragmentation of the pentose substrate in the photorespiration process. Both reactions occur simultaneously and in competition at the same active site. The sequence is that of Ribulose bisphosphate carboxylase large chain from Drosera dichrosepala (Rusty sundew).